The primary structure comprises 146 residues: Villin-like protein ABP41 (146 aa).

This sequence belongs to the villin/gelsolin family. In terms of assembly, binds to actin. As to expression, expressed in pollen (at protein level).

It is found in the cytoplasm. Its subcellular location is the cytoskeleton. In terms of biological role, ca(2+)-dependent actin filament-severing protein that is required for pollen tube growth. Probably regulates the dynamics of the actin cytoskeleton. It can promote the assembly of monomers into filaments (nucleation) as well as sever filaments already formed. The protein is Villin-like protein ABP41 of Lilium davidii (David's lily).